The following is a 434-amino-acid chain: Putative peptidase B (434 aa).

Mn(2+) is bound by residues lysine 198 and aspartate 203. Residue lysine 210 is part of the active site. Mn(2+) is bound by residues aspartate 221, aspartate 280, and glutamate 282. Arginine 284 is an active-site residue.

Belongs to the peptidase M17 family. As to quaternary structure, homohexamer. The cofactor is Mn(2+).

It localises to the cytoplasm. It carries out the reaction Release of an N-terminal amino acid, Xaa, from a peptide or arylamide. Xaa is preferably Glu or Asp but may be other amino acids, including Leu, Met, His, Cys and Gln.. In terms of biological role, probably plays an important role in intracellular peptide degradation. The sequence is that of Putative peptidase B from Haemophilus influenzae (strain ATCC 51907 / DSM 11121 / KW20 / Rd).